Here is a 270-residue protein sequence, read N- to C-terminus: L-fucose dehydrogenase (270 aa).

Positions 19, 21, 40, 41, 62, 63, 89, 154, 158, 187, 189, and 191 each coordinate NAD(+). Residue Y154 is the Proton acceptor of the active site.

This sequence belongs to the short-chain dehydrogenases/reductases (SDR) family. Homotetramer. Highly expressed in brain, placenta, liver and kidney.

Its subcellular location is the cytoplasm. It catalyses the reaction L-fucose + NAD(+) = L-fucono-1,5-lactone + NADH + H(+). The catalysed reaction is D-arabinose + NAD(+) = D-arabinono-1,5-lactone + NADH + H(+). The enzyme catalyses L-galactose + NAD(+) = L-galactono-1,5-lactone + NADH + H(+). It participates in carbohydrate degradation; L-fucose degradation. Its function is as follows. Catalyzes the NAD(+)-dependent oxidation of L-fucose, yielding L-fucono-1,5-lactone, which rapidly converts spontaneously to L-fucone-1,4-lactone. Can also act on D-arabinose and L-galactose, with lower catalytic efficiency. Does not use NADPH. May be the initial enzyme of the L-fucose degradation pathway in mammals. This chain is L-fucose dehydrogenase, found in Homo sapiens (Human).